Here is a 353-residue protein sequence, read N- to C-terminus: S-adenosylmethionine:tRNA ribosyltransferase-isomerase (353 aa).

It belongs to the QueA family. As to quaternary structure, monomer.

Its subcellular location is the cytoplasm. It carries out the reaction 7-aminomethyl-7-carbaguanosine(34) in tRNA + S-adenosyl-L-methionine = epoxyqueuosine(34) in tRNA + adenine + L-methionine + 2 H(+). It functions in the pathway tRNA modification; tRNA-queuosine biosynthesis. In terms of biological role, transfers and isomerizes the ribose moiety from AdoMet to the 7-aminomethyl group of 7-deazaguanine (preQ1-tRNA) to give epoxyqueuosine (oQ-tRNA). The chain is S-adenosylmethionine:tRNA ribosyltransferase-isomerase from Sodalis glossinidius (strain morsitans).